Reading from the N-terminus, the 39-residue chain is Cytochrome b6-f complex subunit 5 (39 aa).

A helical transmembrane segment spans residues 5 to 25 (LLCGIVLGLVPITLLGLFVSA).

Belongs to the PetG family. In terms of assembly, the 4 large subunits of the cytochrome b6-f complex are cytochrome b6, subunit IV (17 kDa polypeptide, PetD), cytochrome f and the Rieske protein, while the 4 small subunits are PetG, PetL, PetM and PetN. The complex functions as a dimer.

The protein localises to the cellular thylakoid membrane. In terms of biological role, component of the cytochrome b6-f complex, which mediates electron transfer between photosystem II (PSII) and photosystem I (PSI), cyclic electron flow around PSI, and state transitions. PetG is required for either the stability or assembly of the cytochrome b6-f complex. The chain is Cytochrome b6-f complex subunit 5 from Prochlorococcus marinus (strain MIT 9301).